The sequence spans 152 residues: Transcriptional repressor NrdR (152 aa).

A zinc finger lies at 3 to 34; sequence CPFCGHADTQVVDSRVSEDGASIRRRRRCLEC. Positions 49-139 constitute an ATP-cone domain; that stretch reads PQVVKQDGHR…VYRSFQDVAE (91 aa).

Belongs to the NrdR family. It depends on Zn(2+) as a cofactor.

In terms of biological role, negatively regulates transcription of bacterial ribonucleotide reductase nrd genes and operons by binding to NrdR-boxes. The chain is Transcriptional repressor NrdR from Laribacter hongkongensis (strain HLHK9).